Consider the following 444-residue polypeptide: Tubulin beta chain (444 aa).

Residues Gln11, Glu69, Ser138, Gly142, Thr143, Gly144, Asn204, and Asn226 each coordinate GTP. Glu69 is a binding site for Mg(2+).

Belongs to the tubulin family. In terms of assembly, dimer of alpha and beta chains. A typical microtubule is a hollow water-filled tube with an outer diameter of 25 nm and an inner diameter of 15 nM. Alpha-beta heterodimers associate head-to-tail to form protofilaments running lengthwise along the microtubule wall with the beta-tubulin subunit facing the microtubule plus end conferring a structural polarity. Microtubules usually have 13 protofilaments but different protofilament numbers can be found in some organisms and specialized cells. It depends on Mg(2+) as a cofactor.

It is found in the cytoplasm. The protein resides in the cytoskeleton. Its function is as follows. Tubulin is the major constituent of microtubules, a cylinder consisting of laterally associated linear protofilaments composed of alpha- and beta-tubulin heterodimers. Microtubules grow by the addition of GTP-tubulin dimers to the microtubule end, where a stabilizing cap forms. Below the cap, tubulin dimers are in GDP-bound state, owing to GTPase activity of alpha-tubulin. The polypeptide is Tubulin beta chain (TBB) (Onchocerca gibsoni).